A 268-amino-acid polypeptide reads, in one-letter code: Kynurenine formamidase (268 aa).

Positions 33–37 match the HGGXW motif; the sequence is HGGGW. Ser107 functions as the Nucleophile in the catalytic mechanism. Residues Asp219 and His251 contribute to the active site.

Belongs to the kynurenine formamidase family. In terms of assembly, homodimer.

The enzyme catalyses N-formyl-L-kynurenine + H2O = L-kynurenine + formate + H(+). It participates in amino-acid degradation; L-tryptophan degradation via kynurenine pathway; L-kynurenine from L-tryptophan: step 2/2. Its function is as follows. Catalyzes the hydrolysis of N-formyl-L-kynurenine to L-kynurenine, the second step in the kynurenine pathway of tryptophan degradation. Kynurenine may be further oxidized to nicotinic acid, NAD(H) and NADP(H). Required for elimination of toxic metabolites. This chain is Kynurenine formamidase, found in Scheffersomyces stipitis (strain ATCC 58785 / CBS 6054 / NBRC 10063 / NRRL Y-11545) (Yeast).